The primary structure comprises 310 residues: ADP-L-glycero-D-manno-heptose-6-epimerase (310 aa).

NADP(+)-binding positions include 10 to 11 (FI), 31 to 32 (DN), Lys38, Lys53, 75 to 79 (EGACS), and Asn92. The active-site Proton acceptor is the Tyr140. Lys144 lines the NADP(+) pocket. Asn169 provides a ligand contact to substrate. Positions 170 and 178 each coordinate NADP(+). Lys178 (proton acceptor) is an active-site residue. Substrate is bound by residues Ser180, His187, 201 to 204 (FEGS), Arg209, and Tyr272.

It belongs to the NAD(P)-dependent epimerase/dehydratase family. HldD subfamily. Homopentamer. NADP(+) is required as a cofactor.

The catalysed reaction is ADP-D-glycero-beta-D-manno-heptose = ADP-L-glycero-beta-D-manno-heptose. It functions in the pathway nucleotide-sugar biosynthesis; ADP-L-glycero-beta-D-manno-heptose biosynthesis; ADP-L-glycero-beta-D-manno-heptose from D-glycero-beta-D-manno-heptose 7-phosphate: step 4/4. Catalyzes the interconversion between ADP-D-glycero-beta-D-manno-heptose and ADP-L-glycero-beta-D-manno-heptose via an epimerization at carbon 6 of the heptose. This chain is ADP-L-glycero-D-manno-heptose-6-epimerase, found in Cronobacter sakazakii (strain ATCC BAA-894) (Enterobacter sakazakii).